We begin with the raw amino-acid sequence, 193 residues long: Ion-translocating oxidoreductase complex subunit A (193 aa).

6 consecutive transmembrane segments (helical) span residues L5–L25, M39–I59, I63–V83, L102–L122, A134–I154, and A171–V191.

It belongs to the NqrDE/RnfAE family. In terms of assembly, the complex is composed of six subunits: RsxA, RsxB, RsxC, RsxD, RsxE and RsxG.

It localises to the cell inner membrane. Its function is as follows. Part of a membrane-bound complex that couples electron transfer with translocation of ions across the membrane. Required to maintain the reduced state of SoxR. In Shigella flexneri serotype 5b (strain 8401), this protein is Ion-translocating oxidoreductase complex subunit A.